We begin with the raw amino-acid sequence, 389 residues long: Rhizopuspepsin-1 (389 aa).

The signal sequence occupies residues 1-21 (MKFTLISSCVALAAMTLAVEA). Positions 22–66 (APNGKKINIPLAKNNSYKPSAKNALNKALAKYNRRKVGSGGITTE) are cleaved as a propeptide — activation peptide. In terms of domain architecture, Peptidase A1 spans 82–385 (YYGEVTVGTP…NQEVPEVQIA (304 aa)). Residue aspartate 100 is part of the active site. An intrachain disulfide couples cysteine 113 to cysteine 116. Aspartate 283 is an active-site residue. Cysteines 317 and 350 form a disulfide.

This sequence belongs to the peptidase A1 family.

It carries out the reaction Hydrolysis of proteins with broad specificity similar to that of pepsin A, preferring hydrophobic residues at P1 and P1'. Clots milk and activates trypsinogen. Does not cleave 4-Gln-|-His-5, but does cleave 10-His-|-Leu-11 and 12-Val-|-Glu-13 in B chain of insulin.. This Rhizopus niveus protein is Rhizopuspepsin-1 (RNAP).